The following is a 493-amino-acid chain: Neuronal pentraxin receptor (493 aa).

The Cytoplasmic portion of the chain corresponds to 1-2; it reads MK. The helical; Signal-anchor for type II membrane protein transmembrane segment at 3–23 threads the bilayer; it reads FLAVLLAAGMLAFLGAVICII. At 24 to 493 the chain is on the extracellular side; the sequence is ASVPLAASPA…FDVCKGRAKA (470 aa). Residues 37-72 form a disordered region; that stretch reads PGGTDNASAASAAGGSGPQRSLSALHSAGGSAGPSV. A glycan (N-linked (GlcNAc...) asparagine) is linked at Asn-42. Residues 57-72 are compositionally biased toward low complexity; the sequence is SLSALHSAGGSAGPSV. Asn-211 is a glycosylation site (N-linked (GlcNAc...) asparagine). A Pentraxin (PTX) domain is found at 285–487; that stretch reads DAFKVSIPIR…GAKKAAFDVC (203 aa). Cysteines 315 and 376 form a disulfide. Residues Asn-340, Glu-418, Gln-419, Asp-420, and Gln-430 each contribute to the Ca(2+) site. Asn-456 carries N-linked (GlcNAc...) asparagine glycosylation.

As to quaternary structure, heteropentamer with NPTX1 and/or NPTX2. Also binds taipoxin-associated calcium-binding protein 49 (TCBP49/RCN2). Interacts with KLHL2. It depends on Ca(2+) as a cofactor. Ubiquitinated by a cullin-RING-based BCR (BTB-CUL3-RBX1) E3 ubiquitin-protein ligase complex containing KLHL2.

The protein resides in the membrane. In terms of biological role, may be involved in mediating uptake of synaptic material during synapse remodeling or in mediating the synaptic clustering of AMPA glutamate receptors at a subset of excitatory synapses. This Mus musculus (Mouse) protein is Neuronal pentraxin receptor (Nptxr).